A 310-amino-acid chain; its full sequence is Proline-rich 28 kDa antigen (310 aa).

An N-terminal signal peptide occupies residues 1–32 (MIQIARTWRVFAGGMATGFIGVVLVTAGKASA). Residues 278 to 310 (QAPAPAPGSAPVGLPGQAPGYPPAGTLTPVPPR) are disordered.

It to M.leprae ML0031.

This is Proline-rich 28 kDa antigen (mtc28) from Mycobacterium bovis (strain ATCC BAA-935 / AF2122/97).